The following is a 164-amino-acid chain: Lipoprotein signal peptidase (164 aa).

4 helical membrane passes run 6-26, 39-59, 65-85, and 88-108; these read LGILTAVIALALDQATKLWLL, VTSFFDLVLAWNTGISYGWFA, GQILMLAFKAVAIVALAIWMA, and TTKLATIGLGLIIGGAIGNAI. Residues Asp118 and Asp140 contribute to the active site. A helical transmembrane segment spans residues 141–161; the sequence is VAIVVGVVALLYDSLIGAPAV.

Belongs to the peptidase A8 family.

The protein localises to the cell inner membrane. The catalysed reaction is Release of signal peptides from bacterial membrane prolipoproteins. Hydrolyzes -Xaa-Yaa-Zaa-|-(S,diacylglyceryl)Cys-, in which Xaa is hydrophobic (preferably Leu), and Yaa (Ala or Ser) and Zaa (Gly or Ala) have small, neutral side chains.. Its pathway is protein modification; lipoprotein biosynthesis (signal peptide cleavage). This protein specifically catalyzes the removal of signal peptides from prolipoproteins. This is Lipoprotein signal peptidase from Rhodopseudomonas palustris (strain TIE-1).